Here is a 141-residue protein sequence, read N- to C-terminus: Endoribonuclease YbeY (141 aa).

Positions 107, 111, and 117 each coordinate Zn(2+).

This sequence belongs to the endoribonuclease YbeY family. Zn(2+) serves as cofactor.

It is found in the cytoplasm. Single strand-specific metallo-endoribonuclease involved in late-stage 70S ribosome quality control and in maturation of the 3' terminus of the 16S rRNA. The protein is Endoribonuclease YbeY of Endomicrobium trichonymphae.